We begin with the raw amino-acid sequence, 690 residues long: CREB-H transcription factor homolog let-607 (690 aa).

Disordered regions lie at residues 87-118, 166-192, and 205-253; these read NDNCYSLSPPDSGSLPISPASTSPSSYHSSGG, SAVHQNQQQQQRRLNQAGFPHQNSNGL, and PASI…KYPP. Composition is skewed to low complexity over residues 100 to 116, 170 to 181, and 213 to 236; these read SLPISPASTSPSSYHSS, QNQQQQQRRLNQ, and PSSSFNPQSTSSTPATSSSSSSST. Positions 284-347 constitute a bZIP domain; it reads DLKRIRRKIR…QSVISQLKKL (64 aa). A basic motif region spans residues 286 to 321; that stretch reads KRIRRKIRNKRSAQTSRKRKQDYIEQLEDRVSESTK. Residues 295–350 adopt a coiled-coil conformation; that stretch reads KRSAQTSRKRKQDYIEQLEDRVSESTKENQALKQQIERLSSENQSVISQLKKLQAQ. The tract at residues 326-333 is leucine-zipper; the sequence is LKQQIERL. Polar residues predominate over residues 451–464; it reads HNNSKYPASGNQNH. 2 disordered regions span residues 451–495 and 509–536; these read HNNS…SMYR and GARKGSSTSSSSASSVASSTSTSSATSP. Composition is skewed to low complexity over residues 480 to 492 and 514 to 535; these read QPKQSYQQQHQPS and SSTSSSSASSVASSTSTSSATS.

The protein belongs to the bZIP family.

The protein localises to the nucleus. In terms of biological role, probable transcription factor, required during migration of the gonadal distal tip cells (DTC). Probably regulates cell adhesion of DTCs via modulation of expression of genes involved in integrin-mediated adhesion, including tln-1, src-1, and integrin pat-2. Modulates expression of genes involved in protein trafficking during embryogenesis, including emo-1, sec-61, calu-1, sec-24.1, enpl-1, sar-1 and tfg-1. In Caenorhabditis elegans, this protein is CREB-H transcription factor homolog let-607.